We begin with the raw amino-acid sequence, 161 residues long: Photosystem II extrinsic protein V (161 aa).

An N-terminal signal peptide occupies residues 1-25 (MKKFFISVVFIVLLTFTTFINSATA). Heme c-binding residues include C61, C64, H65, and H116.

The protein belongs to the cytochrome c family. PsbV subfamily. PSII is composed of 1 copy each of membrane proteins PsbA, PsbB, PsbC, PsbD, PsbE, PsbF, PsbH, PsbI, PsbJ, PsbK, PsbL, PsbM, PsbT, PsbX, PsbY, PsbZ, Psb30/Ycf12, peripheral proteins PsbO, CyanoQ (PsbQ), PsbU, PsbV and a large number of cofactors. It forms dimeric complexes. The cofactor is heme c.

Its subcellular location is the cellular thylakoid membrane. Its function is as follows. One of the extrinsic, lumenal subunits of photosystem II (PSII). PSII is a light-driven water plastoquinone oxidoreductase, using light energy to abstract electrons from H(2)O, generating a proton gradient subsequently used for ATP formation. The extrinsic proteins stabilize the structure of photosystem II oxygen-evolving complex (OEC), the ion environment of oxygen evolution and protect the OEC against heat-induced inactivation. Low-potential cytochrome c that plays a role in the OEC of PSII. The sequence is that of Photosystem II extrinsic protein V from Trichodesmium erythraeum (strain IMS101).